A 165-amino-acid polypeptide reads, in one-letter code: Large ribosomal subunit protein uL10 (165 aa).

This sequence belongs to the universal ribosomal protein uL10 family. Part of the ribosomal stalk of the 50S ribosomal subunit. The N-terminus interacts with L11 and the large rRNA to form the base of the stalk. The C-terminus forms an elongated spine to which L12 dimers bind in a sequential fashion forming a multimeric L10(L12)X complex.

Functionally, forms part of the ribosomal stalk, playing a central role in the interaction of the ribosome with GTP-bound translation factors. The protein is Large ribosomal subunit protein uL10 of Dechloromonas aromatica (strain RCB).